Reading from the N-terminus, the 466-residue chain is 3-isopropylmalate dehydratase large subunit (466 aa).

Cys347, Cys407, and Cys410 together coordinate [4Fe-4S] cluster.

This sequence belongs to the aconitase/IPM isomerase family. LeuC type 1 subfamily. As to quaternary structure, heterodimer of LeuC and LeuD. It depends on [4Fe-4S] cluster as a cofactor.

The catalysed reaction is (2R,3S)-3-isopropylmalate = (2S)-2-isopropylmalate. It participates in amino-acid biosynthesis; L-leucine biosynthesis; L-leucine from 3-methyl-2-oxobutanoate: step 2/4. In terms of biological role, catalyzes the isomerization between 2-isopropylmalate and 3-isopropylmalate, via the formation of 2-isopropylmaleate. The polypeptide is 3-isopropylmalate dehydratase large subunit (Klebsiella pneumoniae (strain 342)).